Here is a 368-residue protein sequence, read N- to C-terminus: MGPPESAAELAAEAVELREPELQLADPASPGEEHVDVEAEGAPGRGRCWPCGAWACGSRGEPEAKKKAPCPGLGLFYTVLSAFLFSVASLFVKKVQGVHAVEISAFRCVVQMLVIIPCLIYRKTGFIGPKGQRLFLFLRGVFGSSAMILMYYAFQTTSLADATVIAFSCPVFTSIFAWIFLKEKYSLWDAFFTLFAIAGVILIVRPPFIFGSDTSGMRESYSEHIKGTFAAIGHAVLAAITLVILRKMGKSVDYFLSIWYYVILGLPEAIIILFVIGEWSLPYCGLDRLFLILIGLLGLGGQIFITKAVQIEKAGLVAIMKTMDIVFAFIFQIAFFDNVPTWWTVGGALCVVVSTTGATIRRWLQGSK.

The next 10 helical transmembrane spans lie at 72-92 (GLGLFYTVLSAFLFSVASLFV), 100-120 (AVEISAFRCVVQMLVIIPCLI), 134-154 (LFLFLRGVFGSSAMILMYYAF), 161-181 (DATVIAFSCPVFTSIFAWIFL), 190-210 (AFFTLFAIAGVILIVRPPFIF), 225-245 (IKGTFAAIGHAVLAAITLVIL), 256-276 (LSIWYYVILGLPEAIIILFVI), 289-309 (LFLILIGLLGLGGQIFITKAV), 316-336 (LVAIMKTMDIVFAFIFQIAFF), and 340-360 (PTWWTVGGALCVVVSTTGATI). EamA domains are found at residues 83 to 205 (FLFS…LIVR) and 236 to 360 (VLAA…GATI).

Belongs to the TMEM20 family. In terms of assembly, interacts with STIM1; stimulated by depletion of intracellular calcium. Interacts with ORAI1. Interacts with the plasma membrane calcium-transporting ATPases ATP2B1 and ATP2B4. Interacts with ATP1A1, ATP2A2, KPNB1 and XPO1.

The protein resides in the cell membrane. It is found in the endoplasmic reticulum membrane. Its function is as follows. May play a role in intracellular calcium sensing and homeostasis. May act as a negative regulator of plasma membrane calcium-transporting ATPases preventing calcium efflux from the cell. This is Solute carrier family 35 member G1 (Slc35g1) from Mus musculus (Mouse).